We begin with the raw amino-acid sequence, 61 residues long: Small ribosomal subunit protein uS14B (61 aa).

Zn(2+)-binding residues include Cys24, Cys27, Cys40, and Cys43.

This sequence belongs to the universal ribosomal protein uS14 family. Zinc-binding uS14 subfamily. In terms of assembly, part of the 30S ribosomal subunit. Contacts proteins S3 and S10. Zn(2+) serves as cofactor.

In terms of biological role, binds 16S rRNA, required for the assembly of 30S particles and may also be responsible for determining the conformation of the 16S rRNA at the A site. The protein is Small ribosomal subunit protein uS14B of Lacticaseibacillus paracasei (strain ATCC 334 / BCRC 17002 / CCUG 31169 / CIP 107868 / KCTC 3260 / NRRL B-441) (Lactobacillus paracasei).